Consider the following 391-residue polypeptide: S-adenosylmethionine synthase (391 aa).

His19 provides a ligand contact to ATP. Residue Asp21 participates in Mg(2+) binding. Glu47 is a binding site for K(+). Residues Glu60 and Gln103 each contribute to the L-methionine site. Residues 103-113 form a flexible loop region; that stretch reads QSADIAQGVDR. ATP is bound by residues 168 to 170, 236 to 237, Asp245, 251 to 252, Ala268, and Lys272; these read DGK, RF, and RK. Residue Asp245 participates in L-methionine binding. Lys276 lines the L-methionine pocket.

The protein belongs to the AdoMet synthase family. In terms of assembly, homotetramer; dimer of dimers. It depends on Mg(2+) as a cofactor. Requires K(+) as cofactor.

The protein resides in the cytoplasm. The enzyme catalyses L-methionine + ATP + H2O = S-adenosyl-L-methionine + phosphate + diphosphate. It participates in amino-acid biosynthesis; S-adenosyl-L-methionine biosynthesis; S-adenosyl-L-methionine from L-methionine: step 1/1. Functionally, catalyzes the formation of S-adenosylmethionine (AdoMet) from methionine and ATP. The overall synthetic reaction is composed of two sequential steps, AdoMet formation and the subsequent tripolyphosphate hydrolysis which occurs prior to release of AdoMet from the enzyme. This Nitratidesulfovibrio vulgaris (strain ATCC 29579 / DSM 644 / CCUG 34227 / NCIMB 8303 / VKM B-1760 / Hildenborough) (Desulfovibrio vulgaris) protein is S-adenosylmethionine synthase.